We begin with the raw amino-acid sequence, 422 residues long: uncharacterized protein (422 aa).

The next 12 helical transmembrane spans lie at 23-43 (IVKISGDMFAFNSILWFLIYD), 47-67 (AIGTALLIAVTFLPEAVLAPV), 90-110 (AIVLIIPLCHFAGFSPLWFVM), 112-132 (LMIVHSATGAAYNPASIALIP), 151-171 (AQIVRLGAVTLCGAFLTFISP), 172-192 (SYTMLIALVLYLVSGFLVLFI), 228-248 (ILYPLAIYCIFMNFAAAPWEA), 263-283 (IVYSLLKATTAAGAFLLGFVL), 291-308 (YGLLFVTAGIIEGFAFFI), 318-340 (VFFAAFTFGAAVSAVNVPEYTII), 352-372 (VYAVIHMISNISIPAGAVICG), and 381-401 (GKVIAVGGIVEIIAGIGILLF).

Belongs to the major facilitator superfamily.

The protein localises to the cell membrane. This is an uncharacterized protein from Bacillus subtilis (strain 168).